A 263-amino-acid polypeptide reads, in one-letter code: Hydroxyethylthiazole kinase (263 aa).

Position 39 (Met-39) interacts with substrate. ATP is bound by residues Lys-115 and Thr-160. Gly-187 lines the substrate pocket.

The protein belongs to the Thz kinase family. Mg(2+) is required as a cofactor.

The enzyme catalyses 5-(2-hydroxyethyl)-4-methylthiazole + ATP = 4-methyl-5-(2-phosphooxyethyl)-thiazole + ADP + H(+). Its pathway is cofactor biosynthesis; thiamine diphosphate biosynthesis; 4-methyl-5-(2-phosphoethyl)-thiazole from 5-(2-hydroxyethyl)-4-methylthiazole: step 1/1. Its function is as follows. Catalyzes the phosphorylation of the hydroxyl group of 4-methyl-5-beta-hydroxyethylthiazole (THZ). The sequence is that of Hydroxyethylthiazole kinase from Staphylococcus aureus (strain bovine RF122 / ET3-1).